Consider the following 217-residue polypeptide: Probable transaldolase (217 aa).

The Schiff-base intermediate with substrate role is filled by lysine 83.

It belongs to the transaldolase family. Type 3B subfamily.

The protein localises to the cytoplasm. The enzyme catalyses D-sedoheptulose 7-phosphate + D-glyceraldehyde 3-phosphate = D-erythrose 4-phosphate + beta-D-fructose 6-phosphate. The protein operates within carbohydrate degradation; pentose phosphate pathway; D-glyceraldehyde 3-phosphate and beta-D-fructose 6-phosphate from D-ribose 5-phosphate and D-xylulose 5-phosphate (non-oxidative stage): step 2/3. In terms of biological role, transaldolase is important for the balance of metabolites in the pentose-phosphate pathway. This chain is Probable transaldolase, found in Dinoroseobacter shibae (strain DSM 16493 / NCIMB 14021 / DFL 12).